A 431-amino-acid chain; its full sequence is Levansucrase Lscbeta (431 aa).

Sucrose is bound by residues W61, D62, A148, R218, and D219. D62 (nucleophile) is an active-site residue. Residue E303 is the Proton donor/acceptor of the active site.

Belongs to the glycosyl hydrolase 68 family. Homodimer.

The catalysed reaction is [6)-beta-D-fructofuranosyl-(2-&gt;](n) alpha-D-glucopyranoside + sucrose = [6)-beta-D-fructofuranosyl-(2-&gt;](n+1) alpha-D-glucopyranoside + D-glucose. With respect to regulation, sucrose hydrolase activity is negatively affected by salt concentration. The levan polymerization rate is constant regardless of sucrose concentration. In terms of biological role, catalyzes the synthesis of levan, a fructose polymer, by transferring the fructosyl moiety from sucrose to a growing acceptor molecule. Also displays sucrose hydrolase activity. The protein is Levansucrase Lscbeta of Pseudomonas syringae pv. actinidiae.